The chain runs to 324 residues: T-cell acute lymphocytic leukemia protein 1 homolog (324 aa).

The interval Met-1 to Leu-49 is disordered. A bHLH domain is found at Val-185–Leu-237. Residues Ser-276–Arg-324 are disordered.

As to expression, expressed in hemopoietic and endothelial lineages. Isoform beta emerges first, expressing in the entire anterior and posterior lateral mesoderm (ALM and PLM respectively), and in the ventral wall of the dorsal aorta, where definitive hemopoiesis begins. Isoform alpha expresses later as two pairs of stripes in the PLM and ALM, and becomes restricted to the intermediate cell mass (ICM) by the 18-somite stage. The ICM is the key site of primitive hemopoiesis, giving rise to the erythroid lineage. Also expressed in all stages of endocardial cell migration and in the developing midbrain, hindbrain and spinal cord. In adults, expressed in the main hemopoietic organs, namely the kidney (where isoform alpha is the predominant isoform) and the spleen. Also expressed in the liver, gill and gonads.

The protein resides in the nucleus. In terms of biological role, transcription factor that plays a pivotal role in hemopoietic and endothelial development, acting synergistically with lmo2 and downstream of clo. Specifies mesodermal precursors to a hemangioblast cell fate. Hemangioblasts are bipotential precursors of blood and endothelium, and in the absence of hemopoietic induction cues such as gata1, tal1/scl-lmo2-induced hemangioblasts differentiate into endothelial cells. Isoform alpha and isoform beta are redundant for the initiation of primitive hemopoiesis but have distinct roles in the regulation of primitive erythroid differentiation and definitive hemopoietic stem cell specification, most likely due to differences in expression levels. Specification of definitive hemopoietic stem cells requires isoform beta. DNA binding is required for erythroid maturation, but not for its other hemopoietic functions. Endothelial roles include development of the dorsal aorta, the site of definitive hemopoiesis in the embryo. Required for angiogenesis but not angioblast specification. Has an additional role in endocardium formation during heart development. May play a role in central nervous system development. The polypeptide is T-cell acute lymphocytic leukemia protein 1 homolog (Danio rerio (Zebrafish)).